We begin with the raw amino-acid sequence, 133 residues long: Small ribosomal subunit protein uS8 (133 aa).

Belongs to the universal ribosomal protein uS8 family. Part of the 30S ribosomal subunit. Contacts proteins S5 and S12.

Functionally, one of the primary rRNA binding proteins, it binds directly to 16S rRNA central domain where it helps coordinate assembly of the platform of the 30S subunit. This chain is Small ribosomal subunit protein uS8, found in Mycoplasma mobile (strain ATCC 43663 / 163K / NCTC 11711) (Mesomycoplasma mobile).